The primary structure comprises 90 residues: Small ribosomal subunit protein uS17 (90 aa).

It belongs to the universal ribosomal protein uS17 family. In terms of assembly, part of the 30S ribosomal subunit.

Functionally, one of the primary rRNA binding proteins, it binds specifically to the 5'-end of 16S ribosomal RNA. The sequence is that of Small ribosomal subunit protein uS17 from Paraburkholderia phymatum (strain DSM 17167 / CIP 108236 / LMG 21445 / STM815) (Burkholderia phymatum).